The sequence spans 389 residues: Probable dual-specificity RNA methyltransferase RlmN (389 aa).

The Proton acceptor role is filled by glutamate 114. The Radical SAM core domain occupies 120-358 (QHYGLSVCVT…CVVRQEHGTD (239 aa)). Cysteine 127 and cysteine 363 are oxidised to a cystine. [4Fe-4S] cluster is bound by residues cysteine 134, cysteine 138, and cysteine 141. Residues 186–187 (GE), serine 218, 241–243 (SLH), and asparagine 319 each bind S-adenosyl-L-methionine. Catalysis depends on cysteine 363, which acts as the S-methylcysteine intermediate. A disordered region spans residues 370–389 (TMKRDRQKAVAEASGKSEGK). Residues 371 to 389 (MKRDRQKAVAEASGKSEGK) show a composition bias toward basic and acidic residues.

This sequence belongs to the radical SAM superfamily. RlmN family. [4Fe-4S] cluster is required as a cofactor.

The protein resides in the cytoplasm. The enzyme catalyses adenosine(2503) in 23S rRNA + 2 reduced [2Fe-2S]-[ferredoxin] + 2 S-adenosyl-L-methionine = 2-methyladenosine(2503) in 23S rRNA + 5'-deoxyadenosine + L-methionine + 2 oxidized [2Fe-2S]-[ferredoxin] + S-adenosyl-L-homocysteine. The catalysed reaction is adenosine(37) in tRNA + 2 reduced [2Fe-2S]-[ferredoxin] + 2 S-adenosyl-L-methionine = 2-methyladenosine(37) in tRNA + 5'-deoxyadenosine + L-methionine + 2 oxidized [2Fe-2S]-[ferredoxin] + S-adenosyl-L-homocysteine. Functionally, specifically methylates position 2 of adenine 2503 in 23S rRNA and position 2 of adenine 37 in tRNAs. The sequence is that of Probable dual-specificity RNA methyltransferase RlmN from Streptococcus thermophilus (strain ATCC BAA-250 / LMG 18311).